A 392-amino-acid chain; its full sequence is 8-amino-7-oxononanoate synthase (392 aa).

Arginine 19 contributes to the substrate binding site. 106–107 (GY) serves as a coordination point for pyridoxal 5'-phosphate. Residue histidine 131 coordinates substrate. Pyridoxal 5'-phosphate contacts are provided by serine 176, histidine 204, and threonine 233. Lysine 236 is modified (N6-(pyridoxal phosphate)lysine). Residue threonine 350 participates in substrate binding.

The protein belongs to the class-II pyridoxal-phosphate-dependent aminotransferase family. BioF subfamily. Homodimer. Requires pyridoxal 5'-phosphate as cofactor.

It carries out the reaction 6-carboxyhexanoyl-[ACP] + L-alanine + H(+) = (8S)-8-amino-7-oxononanoate + holo-[ACP] + CO2. The protein operates within cofactor biosynthesis; biotin biosynthesis. In terms of biological role, catalyzes the decarboxylative condensation of pimeloyl-[acyl-carrier protein] and L-alanine to produce 8-amino-7-oxononanoate (AON), [acyl-carrier protein], and carbon dioxide. This Pseudomonas fluorescens (strain ATCC BAA-477 / NRRL B-23932 / Pf-5) protein is 8-amino-7-oxononanoate synthase.